The following is a 66-amino-acid chain: Toxin Tppa2 (66 aa).

Positions 1-63 constitute an LCN-type CS-alpha/beta domain; that stretch reads KDGYLVGNDG…TWSRATNKCG (63 aa). Intrachain disulfides connect Cys-11/Cys-62, Cys-15/Cys-37, Cys-23/Cys-43, and Cys-27/Cys-45. Cys-62 carries the post-translational modification Cysteine amide.

The protein belongs to the long (4 C-C) scorpion toxin superfamily. Sodium channel inhibitor family. Beta subfamily. Expressed by the venom gland.

It is found in the secreted. Its function is as follows. Beta toxins bind voltage-independently at site-4 of sodium channels (Nav) and shift the voltage of activation toward more negative potentials thereby affecting sodium channel activation and promoting spontaneous and repetitive firing. The sequence is that of Toxin Tppa2 from Tityus pachyurus (Colombian scorpion).